A 214-amino-acid chain; its full sequence is Small ribosomal subunit protein eS6 (214 aa).

This sequence belongs to the eukaryotic ribosomal protein eS6 family.

In Saccharolobus islandicus (strain L.S.2.15 / Lassen #1) (Sulfolobus islandicus), this protein is Small ribosomal subunit protein eS6.